A 238-amino-acid chain; its full sequence is Ribonuclease PH (238 aa).

Phosphate-binding positions include Arg-86 and 124–126; that span reads GTR.

This sequence belongs to the RNase PH family. Homohexameric ring arranged as a trimer of dimers.

The enzyme catalyses tRNA(n+1) + phosphate = tRNA(n) + a ribonucleoside 5'-diphosphate. Its function is as follows. Phosphorolytic 3'-5' exoribonuclease that plays an important role in tRNA 3'-end maturation. Removes nucleotide residues following the 3'-CCA terminus of tRNAs; can also add nucleotides to the ends of RNA molecules by using nucleoside diphosphates as substrates, but this may not be physiologically important. Probably plays a role in initiation of 16S rRNA degradation (leading to ribosome degradation) during starvation. This is Ribonuclease PH from Acinetobacter baumannii (strain AB307-0294).